A 327-amino-acid polypeptide reads, in one-letter code: MSISDNNMSGRSHDPEQIDLIDLLMQLWRGKVTIIICIVVAIALAVGYLAVAKEKWTSIAIVTQPDAGQLASYNNAMDVLFGANAPEMTDVQAGFIGRFSSAFSALAETLDNQQEPEKLSIDAAVKGQTLPLKVSYTGKTSEEAQKTLAQYIQQVDEGVAKELNADLSMSMETRLADLQKSLAAQEAVAKEQKTLRIAQMTQALKVAQQSNIKLPQVQQVDQVSQDSMFMLGSEALSSMVENEATRPLTFSDQYYQTRQNLLEVQALEVAPDSVHAYRYVMKPTLPIRRDSPKKAITLVLAVLIGGMIGAGVVLGRNALRGYKAKAE.

At 1 to 31 the chain is on the cytoplasmic side; that stretch reads MSISDNNMSGRSHDPEQIDLIDLLMQLWRGK. Residues 32–52 form a helical membrane-spanning segment; it reads VTIIICIVVAIALAVGYLAVA. Topologically, residues 53-294 are periplasmic; sequence KEKWTSIAIV…LPIRRDSPKK (242 aa). The helical transmembrane segment at 295–315 threads the bilayer; that stretch reads AITLVLAVLIGGMIGAGVVLG. Topologically, residues 316-327 are cytoplasmic; it reads RNALRGYKAKAE.

The protein belongs to the WzzB/Cld/Rol family.

Its subcellular location is the cell inner membrane. It functions in the pathway bacterial outer membrane biogenesis; lipopolysaccharide biosynthesis. In terms of biological role, confers a modal distribution of chain length on the O-antigen component of lipopolysaccharide (LPS). Gives rise to a reduced number of short chain molecules and increases in numbers of longer molecules, with a modal value of 13 (in strain O111/M92) and of 17 (in strain K12). This is Chain length determinant protein (wzzB) from Escherichia coli O111:H-.